Here is a 241-residue protein sequence, read N- to C-terminus: uncharacterized protein (241 aa).

This sequence belongs to the AB hydrolase superfamily. AB hydrolase 2 family.

This is an uncharacterized protein from Schizosaccharomyces pombe (strain 972 / ATCC 24843) (Fission yeast).